Reading from the N-terminus, the 2110-residue chain is Protein Ycf2 (2110 aa).

1336–1343 (GSIGTGRS) provides a ligand contact to ATP. The interval 1852–1876 (EEEAELQDEEAELQDEGAGRKDEEA) is disordered. Residues 1854–1866 (EAELQDEEAELQD) are compositionally biased toward acidic residues.

Belongs to the Ycf2 family.

The protein localises to the plastid. It is found in the chloroplast stroma. Probable ATPase of unknown function. Its presence in a non-photosynthetic plant (Epifagus virginiana) and experiments in tobacco indicate that it has an essential function which is probably not related to photosynthesis. The protein is Protein Ycf2 (ycf2-A) of Pelargonium hortorum (Common geranium).